The chain runs to 297 residues: Phosphoribosylaminoimidazole-succinocarboxamide synthase (297 aa).

This sequence belongs to the SAICAR synthetase family.

The catalysed reaction is 5-amino-1-(5-phospho-D-ribosyl)imidazole-4-carboxylate + L-aspartate + ATP = (2S)-2-[5-amino-1-(5-phospho-beta-D-ribosyl)imidazole-4-carboxamido]succinate + ADP + phosphate + 2 H(+). The protein operates within purine metabolism; IMP biosynthesis via de novo pathway; 5-amino-1-(5-phospho-D-ribosyl)imidazole-4-carboxamide from 5-amino-1-(5-phospho-D-ribosyl)imidazole-4-carboxylate: step 1/2. The protein is Phosphoribosylaminoimidazole-succinocarboxamide synthase of Corynebacterium diphtheriae (strain ATCC 700971 / NCTC 13129 / Biotype gravis).